Consider the following 2742-residue polypeptide: MAASERLYELWLLYYAQKDLGYLQQWLKAFVGVFEKTISLSSLEPRRPEEAGAEVPLLPLDALHALAEQLDQDDLDQALLLLKLFIILCRNLENVEAGWGQVLVPRVLALLTVLMAELKGSSQESHGTQLENVALHALLLCEGLFDPYQTWRRQLTGEVISSKEKSKYKFPPAALPCEFGAFFQENLQDAERLPPTLLLRLIHLFGAILAGGKANGQMAVSAGSVQGLLGVVRGWGRGPAQDPQQVPLALRALVGAVHVLHASRAPPRGPELRTLLEGYFHILNADWPTSPSSSPEEALVTLRVSMLDAIPMMLACEDRPVLQATFLSNNCFEHLIRLIQNSKLYLQARAPPEGDSDLATWLLTEPDVQKVLDQDTDAIAVHVVRVLTCIMSGSPSAKEVFKERIGYQHLQEVLQSHGPPTHRLLQELLNMAVEGDHSMHPPPPIRNEQPVLVLMQWLPALPTAELRLFLAQRLWWLCDSCPASRTTCVQAGLVGYLLETLNTGTALGARCQEQLLALLQALGRVSLRPLELRRLLRPPPGLDSESSGNESQKARHAGAVIRALSGMARHRGPARALRYFDLTPSMAGIMVPPVQRWPGAGFTFHAWLCLQSSEAVPTSAPSRPLQRKQLYSFFTSSGSGFEAFFTAAGTLVVAVCTRKEYVTVNLPEVSFADSAWHCVAIVHVPGRRPFSQNLVNVFKDGHLVKTVPFRFPSLSEPFSSCCIGSAGHRTTTTTTGLPASSVSTALAHTHPSLTRSQSVPASTGLGWGPGLGTPLQEGSVSSTLAGTQDTRWGSPTSLEGELGAVAIFHEALQPSALRVLCSLGPNEPAPFKPEGELHEFGTKLLLHYSPQACKNNICLDLSPGHGLDGRLTGHRVETWDVKDVVNCVGGMGVLLPLLERVAVQPQEAEAGPCETHDLVGPELTSGRNTQGLLLPLGKSSEDRMERNAVAAFLLMLRNFLQNHTVNQESLVQCQGPAIIGALLRKVPSSAMDMNVLMSAQLLMEQAAADGGGPLLYLLYQHLLFNFHLWTLSDFAVRLGHIQYMSSMVREHRQKLRKKYGVQFLLDALRTHYSPQRERPLAADDLRTVQTSLLGLVREFLVRNFSVEDMQVVLNFLAATGDDGQVVGTLELLLTLLQGSPVQDPLAAFLLELGNLEVLLALLVRPKSTPLLTDRVCKILRRLQQNERLPERNRQRIRLHDCGLQGLVASLSEESISPQLCQGLYKLFVGTDCLNLSDLLAVVQLSLQADLSVRLDICRQLFYLIYGQPDVVRLLARQAGWQDVLTRLYVLEAATDSSPPRFLPELPISSELALSPPPTELPADSSDVFLPSESPCPDQDAFYQALSPFSTPFDLGLERASIGSGNTAGGGSSNGTVTPASQPGTPSPLDGPRPFPTAQGRHSSSLSNVLEDGSLLEPNISGDDTSNTSNPQQTPEEELCNLLTNVLFSVTWRGVEGSAEAAWRERGQVFSVLTQLGASATLVRPPDCIKRSLLEMMLESALTDIKEAPPGGLANLSQQALWLLRLLQDFLCAEGHGNQELWSEKLFEGVCNLLDRLGAWPHLANSTADLREMAQIGLRLVLGYILLEDPQLHAQAYVKLHTLLQTAVPTRREEACYVLSKLEAALSRALTTSSSETEHASTAVAASERCSWLVPLVRTLLDRAYGPLGLQWGLPSLPPTNGSPTFFEDFQAFCATAEWRHFIDKQVQPTMSKFEMDTYAKSHDLMSGFWNACYDTLMSSGQRHQRDRIQSRRAFKELVLEPAQRRARVEGLRYASVLKQQAAQHSTALLHWGALWRQLSSPCGAWALRIPPAPHWKLSSAETYSRMRLKLVPNHHFDPHLEASALRDNLGEAPMTPTEETSLPLAVTKEAKISAPPEELPEEQLGEEDLAALESLMEAAELDEKREKLVLSAECQLVTVVAVVPGLLEITTQHVYFYDGSTERVETEEGIGHDFRRPLAQLREVHLRRFNLRRSALELFFIDQSNYFLNFPHKVAASSASSPCQAPRPQLYPIPSHTQLRNQVYSLLLRLRPPTQGYLSSRSPLEMLRASGLTQKWVQREISNFEYLMQLNTIAGRTYNDLSQYPVFPWVLQDYVSPVLDLSNPAVFRDLSKPIGVVNPKHAQLVREKYESFEDPAGTIDKFHYGTHYSNAAGVMHYLIRVEPFTSLHVQLQSGRFDCSDRQFHSVAAAWQARLESPADVKELIPEFFYFPDFLENQNGFDLGCLQLTNEKVGDVVLPPWAGSPEDFIQKHRQALESEYVSTHLHEWIDLIFGYKQRGPAAEEALNVFYYCTYEGAVDLDHVADERERKALEGIISNFGQTPCQLLKEPHPPRLSAEEAANRLARLDTNSPSIFQNLNQLKAFFAEVVSEAVPLVLALVPHRQSHSFITQSSSDMLVTVSASGLLGTHTWLPYDRNINNYFTFSKDPTMGSPKVQKLLSGPWVSDSGVSAQALAVAPDGKLLFSGGHWDGSLRVTSLPRGRLLNQLSRHLDIVTCLALDTCGIYLISGSRDTTCMVWRLLQQSGLSAGLAPKPVQVLYGHVAAVSCVAISTELDMAVSGSEDGTVIIHTVRRGQFVAALRPPGATLPGPISHLALGAEGQIVVQSSACERPGAQVTYSLHLYSVNGRLRASVTLTEQPTALTVAEDFVLLGTAQCSLHILHLNKLRPAVPPLPMKVPVHSVSVTKERSHVLVGLEDGKLIVVGAGQPSEVRSSQFARRLWRSSRRISQVSSGETEYNPGEAR.

2 disordered regions span residues 1312-1333 (ALSPPPTELPADSSDVFLPSES) and 1356-1434 (LERA…QQTP). Residues 1384–1394 (TPSPLDGPRPF) show a composition bias toward pro residues. Residues 1421 to 1433 (GDDTSNTSNPQQT) are compositionally biased toward polar residues. At Thr1855 the chain carries Phosphothreonine. The BEACH-type PH domain maps to 1903–2028 (EKREKLVLSA…LRNQVYSLLL (126 aa)). Residues 2041-2333 (RSPLEMLRAS…QLLKEPHPPR (293 aa)) form the BEACH domain. WD repeat units follow at residues 2374–2412 (LVLALVPHRQSHSFITQSSSDMLVTVSASGLLGTHTWLP), 2436–2479 (KLLS…SLPR), 2482–2519 (LLNQLSRHLDIVTCLALDTCGIYLISGSRDTTCMVWRL), 2532–2570 (KPVQVLYGHVAAVSCVAISTELDMAVSGSEDGTVIIHTV), 2577–2619 (AALR…TYSL), 2627–2662 (RLRASVTLTEQPTALTVAEDFVLLGTAQCSLHILHL), and 2670–2705 (PPLPMKVPVHSVSVTKERSHVLVGLEDGKLIVVGAG). Phosphoserine is present on residues Ser2727 and Ser2730.

It belongs to the WD repeat neurobeachin family.

It is found in the endoplasmic reticulum. Functionally, probably involved in thrombopoiesis. Plays a role in the development or secretion of alpha-granules, that contain several growth factors important for platelet biogenesis. This is Neurobeachin-like protein 2 (Nbeal2) from Mus musculus (Mouse).